A 435-amino-acid chain; its full sequence is 3-phosphoshikimate 1-carboxyvinyltransferase (435 aa).

Lysine 23, serine 24, and arginine 28 together coordinate 3-phosphoshikimate. A phosphoenolpyruvate-binding site is contributed by lysine 23. 2 residues coordinate phosphoenolpyruvate: glycine 96 and arginine 124. 6 residues coordinate 3-phosphoshikimate: serine 167, serine 168, glutamine 169, serine 196, glutamate 311, and histidine 340. Glutamine 169 is a binding site for phosphoenolpyruvate. Residue glutamate 311 is the Proton acceptor of the active site. Residues arginine 344, arginine 385, and lysine 410 each contribute to the phosphoenolpyruvate site.

This sequence belongs to the EPSP synthase family. In terms of assembly, monomer.

Its subcellular location is the cytoplasm. The enzyme catalyses 3-phosphoshikimate + phosphoenolpyruvate = 5-O-(1-carboxyvinyl)-3-phosphoshikimate + phosphate. Its pathway is metabolic intermediate biosynthesis; chorismate biosynthesis; chorismate from D-erythrose 4-phosphate and phosphoenolpyruvate: step 6/7. Functionally, catalyzes the transfer of the enolpyruvyl moiety of phosphoenolpyruvate (PEP) to the 5-hydroxyl of shikimate-3-phosphate (S3P) to produce enolpyruvyl shikimate-3-phosphate and inorganic phosphate. In Mycolicibacterium paratuberculosis (strain ATCC BAA-968 / K-10) (Mycobacterium paratuberculosis), this protein is 3-phosphoshikimate 1-carboxyvinyltransferase.